The following is a 359-amino-acid chain: PWWP domain-containing protein 1 (359 aa).

The interval 1–37 (MNNARTNAKRRRLSSKQGGLSISEGKESNIPSVVEES) is disordered. In terms of domain architecture, PWWP spans 52–114 (FGDRILVKAP…RNSVKPLLDS (63 aa)). Disordered stretches follow at residues 133–161 (AYEA…AAEE) and 204–255 (VAST…SPLN). The segment covering 204-224 (VASTSRSSTQLSDQRYPLSSN) has biased composition (polar residues). Residue serine 252 is modified to Phosphoserine.

Interacts with set9 and histone H4K20me1. Associates with nucleosomes.

The protein localises to the nucleus. In terms of biological role, necessary for DNA damage checkpoint activation. Required for the association of set9 with chromatin and subsequent methylation of H4K20. Associates with H4K20me1 to increase the concentration of set9 on chromatin to perform H4K20me3. H4K20me3 is mainly enriched at heterochromatin and is required for proper heterochromatin assembly. This is PWWP domain-containing protein 1 (pdp1) from Schizosaccharomyces pombe (strain 972 / ATCC 24843) (Fission yeast).